Reading from the N-terminus, the 340-residue chain is Delta-aminolevulinic acid dehydratase (340 aa).

The Zn(2+) site is built by C133, C135, and C143. The active-site Schiff-base intermediate with substrate is the K210. Residues R220 and R232 each contribute to the 5-aminolevulinate site. Residue K263 is the Schiff-base intermediate with substrate of the active site. Residues S290 and Y329 each contribute to the 5-aminolevulinate site.

The protein belongs to the ALAD family. In terms of assembly, homooctamer. It depends on Zn(2+) as a cofactor.

It carries out the reaction 2 5-aminolevulinate = porphobilinogen + 2 H2O + H(+). Its pathway is porphyrin-containing compound metabolism; protoporphyrin-IX biosynthesis; coproporphyrinogen-III from 5-aminolevulinate: step 1/4. Functionally, catalyzes an early step in the biosynthesis of tetrapyrroles. Binds two molecules of 5-aminolevulinate per subunit, each at a distinct site, and catalyzes their condensation to form porphobilinogen. The chain is Delta-aminolevulinic acid dehydratase (HEM2) from Candida glabrata (strain ATCC 2001 / BCRC 20586 / JCM 3761 / NBRC 0622 / NRRL Y-65 / CBS 138) (Yeast).